The sequence spans 444 residues: tRNA-2-methylthio-N(6)-dimethylallyladenosine synthase (444 aa).

The MTTase N-terminal domain maps to 6–124 (KTFKIITYGC…LPQLIEEIKA (119 aa)). The [4Fe-4S] cluster site is built by C15, C51, C85, C161, C165, and C168. One can recognise a Radical SAM core domain in the interval 147–377 (RARGAQAFVT…MELQNSISLA (231 aa)). Residues 380-443 (EALVGQEVEV…TWLLKGEMVD (64 aa)) form the TRAM domain.

Belongs to the methylthiotransferase family. MiaB subfamily. Monomer. Requires [4Fe-4S] cluster as cofactor.

It localises to the cytoplasm. It catalyses the reaction N(6)-dimethylallyladenosine(37) in tRNA + (sulfur carrier)-SH + AH2 + 2 S-adenosyl-L-methionine = 2-methylsulfanyl-N(6)-dimethylallyladenosine(37) in tRNA + (sulfur carrier)-H + 5'-deoxyadenosine + L-methionine + A + S-adenosyl-L-homocysteine + 2 H(+). In terms of biological role, catalyzes the methylthiolation of N6-(dimethylallyl)adenosine (i(6)A), leading to the formation of 2-methylthio-N6-(dimethylallyl)adenosine (ms(2)i(6)A) at position 37 in tRNAs that read codons beginning with uridine. The protein is tRNA-2-methylthio-N(6)-dimethylallyladenosine synthase of Moorella thermoacetica (strain ATCC 39073 / JCM 9320).